The following is a 486-amino-acid chain: Protein hold'em (486 aa).

Positions 166 to 285 (IITTNVNLLV…DCRLLLAFAA (120 aa)) form a DNA-binding region, OB.

This sequence belongs to the MEIOB family. In terms of assembly, interacts with mei-9 and Ercc1.

In terms of biological role, single-stranded DNA-binding protein required for meiosis. May be involved in the resolution of recombination intermediates into crossovers in the meiotic recombination pathway. This Drosophila melanogaster (Fruit fly) protein is Protein hold'em (hdm).